Here is a 225-residue protein sequence, read N- to C-terminus: Uracil-DNA glycosylase (225 aa).

Asp65 acts as the Proton acceptor in catalysis.

Belongs to the uracil-DNA glycosylase (UDG) superfamily. UNG family.

The protein resides in the cytoplasm. It carries out the reaction Hydrolyzes single-stranded DNA or mismatched double-stranded DNA and polynucleotides, releasing free uracil.. Its function is as follows. Excises uracil residues from the DNA which can arise as a result of misincorporation of dUMP residues by DNA polymerase or due to deamination of cytosine. In Bacillus anthracis (strain A0248), this protein is Uracil-DNA glycosylase.